We begin with the raw amino-acid sequence, 354 residues long: Probable L-ascorbate-6-phosphate lactonase UlaG (354 aa).

The protein belongs to the UlaG family. Requires a divalent metal cation as cofactor.

It localises to the cytoplasm. The catalysed reaction is L-ascorbate 6-phosphate + H2O = 3-dehydro-L-gulonate 6-phosphate. It participates in cofactor degradation; L-ascorbate degradation; D-xylulose 5-phosphate from L-ascorbate: step 1/4. Its function is as follows. Probably catalyzes the hydrolysis of L-ascorbate-6-P into 3-keto-L-gulonate-6-P. Is essential for L-ascorbate utilization under anaerobic conditions. This Salmonella agona (strain SL483) protein is Probable L-ascorbate-6-phosphate lactonase UlaG.